A 166-amino-acid polypeptide reads, in one-letter code: Ubiquitin-fold modifier-conjugating enzyme 1 (166 aa).

The active-site Glycyl thioester intermediate is Cys116.

It belongs to the ubiquitin-conjugating enzyme family. UFC1 subfamily.

E2-like enzyme which forms an intermediate with UFM1 via a thioester linkage. The protein is Ubiquitin-fold modifier-conjugating enzyme 1 of Monosiga brevicollis (Choanoflagellate).